The primary structure comprises 326 residues: Phospholipid scramblase 4 (326 aa).

The segment at 1–32 (MSGLVPTAPEQPTEEMENQIKSPTAVPDAPPD) is disordered. Residues 1-94 (MSGLVPTAPE…PVTNQPAPIM (94 aa)) are proline-rich domain (PRD). Residues 1–299 (MSGLVPTAPE…IRFPLALDVK (299 aa)) are Cytoplasmic-facing. The short motif at 18 to 25 (NQIKSPTA) is the SH3-binding 1 element. The short motif at 30–33 (PPDY) is the PPxY motif element. Positions 41–49 (PAGPVASPS) match the SH3-binding 2 motif. Phosphotyrosine; by ABL occurs at positions 79 and 84. An SH3-binding 3 motif is present at residues 94 to 102 (MWMAGPAPV). 5 S-palmitoyl cysteine lipidation sites follow: Cys-193, Cys-194, Cys-195, Cys-197, and Cys-198. Residues 300-316 (MKAMIFGSCFLIDFMYF) traverse the membrane as a helical segment. Over 317-326 (ERPPPRRMSR) the chain is Extracellular.

The protein belongs to the phospholipid scramblase family. Interacts with PDCD6. Interacts with KPNA2; this interaction mediates the nucleus import of PLSCR4. Ca(2+) serves as cofactor. Requires Mg(2+) as cofactor. It depends on Zn(2+) as a cofactor.

It localises to the cell membrane. It is found in the nucleus. It carries out the reaction a 1,2-diacyl-sn-glycero-3-phosphocholine(in) = a 1,2-diacyl-sn-glycero-3-phosphocholine(out). It catalyses the reaction a 1,2-diacyl-sn-glycero-3-phospho-L-serine(in) = a 1,2-diacyl-sn-glycero-3-phospho-L-serine(out). Its function is as follows. Catalyzes metal ion-induced ATP-independent rapid bidirectional and non-specific movement of phospholipids (lipid scrambling or lipid flip-flop) between the inner and outer leaflet of the plasma membrane and participates in the redistribution of phospholipids between membrane leaflets. Metal ions bind to the calcium-binding site and induce conformation change in the protein. Has a greater affi nity for Ca(2+) than Mg(2+) and Zn(2+). The polypeptide is Phospholipid scramblase 4 (Mus musculus (Mouse)).